A 464-amino-acid polypeptide reads, in one-letter code: D-2-hydroxyglutarate dehydrogenase (464 aa).

The FAD-binding PCMH-type domain maps to 37-216; it reads FAPAPSAIVF…VEATMRLERQ (180 aa). 3 residues coordinate (R)-2-hydroxyglutarate: Arg325, Ser329, and Lys339. Positions 325, 329, and 339 each coordinate (R)-malate. 2 residues coordinate Zn(2+): His374 and His381. (R)-2-hydroxyglutarate is bound at residue Asn383. Glu420 contributes to the Zn(2+) binding site. His421 is a binding site for (R)-2-hydroxyglutarate. Residue His421 participates in (R)-malate binding.

Belongs to the FAD-binding oxidoreductase/transferase type 4 family. As to quaternary structure, homodimer. Requires FAD as cofactor.

It catalyses the reaction (R)-2-hydroxyglutarate + A = 2-oxoglutarate + AH2. The enzyme catalyses (R)-malate + A = oxaloacetate + AH2. With respect to regulation, activated by Zn(2+) ions at low concentrations (10 uM) and inhibited by Zn(2+), Fe(2+) and Ni(2+) at high concentrations (10 mM). In terms of biological role, catalyzes the dehydrogenation of (R)-2-hydroxyglutarate (D-2-hydroxyglutarate or D-2-HG) to 2-oxoglutarate and of (R)-malate (D-malate) to oxaloacetate. Is functionally tied to L-serine biosynthesis, via its coupling with the D-3-phosphoglycerate dehydrogenase SerA, encoded by the adjacent gene in the locus. Is required for the utilization of D-2-hydroxyglutarate as well as D-malate as the sole carbon source for growth of P.stutzeri. Active in vitro with artificial electron acceptors such as 2,6-dichlorophenolindophenol (DCPIP) and appears to couple with electron transfer flavoprotein (ETF) for efficient oxidation of both D-2-hydroxyglutarate and D-malate in vivo. Cannot catalyze the oxidation of L-2-hydroxyglutarate, D-lactate, D-tartrate, D-2-hydroxybutanoate, D-mandelate, D-glycerate and D-phenyllactate. The chain is D-2-hydroxyglutarate dehydrogenase from Stutzerimonas stutzeri (strain A1501) (Pseudomonas stutzeri).